The sequence spans 434 residues: UDP-N-acetylglucosamine 1-carboxyvinyltransferase 1 (434 aa).

A phosphoenolpyruvate-binding site is contributed by 22–23 (KN). UDP-N-acetyl-alpha-D-glucosamine is bound at residue R93. Residue C117 is the Proton donor of the active site. C117 is modified (2-(S-cysteinyl)pyruvic acid O-phosphothioketal). UDP-N-acetyl-alpha-D-glucosamine is bound by residues 122–126 (RPIDQ), D306, and V328.

This sequence belongs to the EPSP synthase family. MurA subfamily.

The protein resides in the cytoplasm. It carries out the reaction phosphoenolpyruvate + UDP-N-acetyl-alpha-D-glucosamine = UDP-N-acetyl-3-O-(1-carboxyvinyl)-alpha-D-glucosamine + phosphate. Its pathway is cell wall biogenesis; peptidoglycan biosynthesis. In terms of biological role, cell wall formation. Adds enolpyruvyl to UDP-N-acetylglucosamine. The sequence is that of UDP-N-acetylglucosamine 1-carboxyvinyltransferase 1 from Bacillus cereus (strain ATCC 10987 / NRS 248).